We begin with the raw amino-acid sequence, 244 residues long: NAD(P)H-quinone oxidoreductase subunit K (244 aa).

The [4Fe-4S] cluster site is built by cysteine 60, cysteine 61, cysteine 125, and cysteine 156. The disordered stretch occupies residues 213–244 (TSANSIPSSKKEKITELPDNNEKAEIIDTLEN). The segment covering 221–238 (SKKEKITELPDNNEKAEI) has biased composition (basic and acidic residues).

It belongs to the complex I 20 kDa subunit family. In terms of assembly, NDH-1 can be composed of about 15 different subunits; different subcomplexes with different compositions have been identified which probably have different functions. [4Fe-4S] cluster is required as a cofactor.

Its subcellular location is the cellular thylakoid membrane. The enzyme catalyses a plastoquinone + NADH + (n+1) H(+)(in) = a plastoquinol + NAD(+) + n H(+)(out). It catalyses the reaction a plastoquinone + NADPH + (n+1) H(+)(in) = a plastoquinol + NADP(+) + n H(+)(out). NDH-1 shuttles electrons from an unknown electron donor, via FMN and iron-sulfur (Fe-S) centers, to quinones in the respiratory and/or the photosynthetic chain. The immediate electron acceptor for the enzyme in this species is believed to be plastoquinone. Couples the redox reaction to proton translocation, and thus conserves the redox energy in a proton gradient. Cyanobacterial NDH-1 also plays a role in inorganic carbon-concentration. This chain is NAD(P)H-quinone oxidoreductase subunit K, found in Prochlorococcus marinus (strain MIT 9301).